A 118-amino-acid chain; its full sequence is Small ribosomal subunit protein uS13 (118 aa).

The segment at 92–118 (RRGHPLRGQRTRTNARTRKGPRKAIRK) is disordered.

This sequence belongs to the universal ribosomal protein uS13 family. As to quaternary structure, part of the 30S ribosomal subunit. Forms a loose heterodimer with protein S19. Forms two bridges to the 50S subunit in the 70S ribosome.

Its function is as follows. Located at the top of the head of the 30S subunit, it contacts several helices of the 16S rRNA. In the 70S ribosome it contacts the 23S rRNA (bridge B1a) and protein L5 of the 50S subunit (bridge B1b), connecting the 2 subunits; these bridges are implicated in subunit movement. Contacts the tRNAs in the A and P-sites. The chain is Small ribosomal subunit protein uS13 from Xanthomonas campestris pv. campestris (strain ATCC 33913 / DSM 3586 / NCPPB 528 / LMG 568 / P 25).